A 175-amino-acid polypeptide reads, in one-letter code: MIITLSGQPGSGKTSVAKELAEKYGFVVISAGEQFRKLAAERGMTLEEFGRLAENDPSIDLAIDQRQKELSRQFPNVLVEGRLAGRTIEADMRIWLKTPLRIRAERISNRENIPVHRAYDETHAREICELSRYKKYYDIDLTDLSCYDLVIDTSKWDAKGVSSIIFKAIDELKKA.

ATP is bound at residue 7-15; that stretch reads GQPGSGKTS.

The protein belongs to the cytidylate kinase family. Type 2 subfamily.

It is found in the cytoplasm. The catalysed reaction is CMP + ATP = CDP + ADP. It catalyses the reaction dCMP + ATP = dCDP + ADP. This Methanocella arvoryzae (strain DSM 22066 / NBRC 105507 / MRE50) protein is Cytidylate kinase.